A 663-amino-acid chain; its full sequence is UvrABC system protein B (663 aa).

The 241-residue stretch at 31–271 (DNIEGGEKAQ…EQSISKIQAE (241 aa)) folds into the Helicase ATP-binding domain. 44-51 (GATGTGKT) contacts ATP. The Beta-hairpin motif lies at 97 to 120 (YYDYYQPEAYVPSSDTYIEKDSSV). The Helicase C-terminal domain maps to 435-601 (QMDDLLGEIN…TIKKDIRDLI (167 aa)). In terms of domain architecture, UVR spans 627-662 (QEAIKQLQKNMQEAAELLDFELAAQLRDLILELKAM).

It belongs to the UvrB family. Forms a heterotetramer with UvrA during the search for lesions. Interacts with UvrC in an incision complex.

It localises to the cytoplasm. The UvrABC repair system catalyzes the recognition and processing of DNA lesions. A damage recognition complex composed of 2 UvrA and 2 UvrB subunits scans DNA for abnormalities. Upon binding of the UvrA(2)B(2) complex to a putative damaged site, the DNA wraps around one UvrB monomer. DNA wrap is dependent on ATP binding by UvrB and probably causes local melting of the DNA helix, facilitating insertion of UvrB beta-hairpin between the DNA strands. Then UvrB probes one DNA strand for the presence of a lesion. If a lesion is found the UvrA subunits dissociate and the UvrB-DNA preincision complex is formed. This complex is subsequently bound by UvrC and the second UvrB is released. If no lesion is found, the DNA wraps around the other UvrB subunit that will check the other stand for damage. This Streptococcus equi subsp. equi (strain 4047) protein is UvrABC system protein B.